A 101-amino-acid chain; its full sequence is Apolipoprotein C-II (101 aa).

The N-terminal stretch at 1 to 22 is a signal peptide; the sequence is MGTRFLLALFLVLLVLGFEVQG. The interval 66 to 74 is lipid binding; that stretch reads TVDEKLRDM. A lipoprotein lipase cofactor region spans residues 78-101; it reads STAAMSTYAGILTDQVLSMLKGEE.

It belongs to the apolipoprotein C2 family. In terms of processing, proapolipoprotein C-II is synthesized as a sialic acid containing glycoprotein which is subsequently desialylated prior to its proteolytic processing. Proapolipoprotein C-II, the major form found in plasma undergoes proteolytic cleavage of its N-terminal hexapeptide to generate apolipoprotein C-II, which occurs as the minor form in plasma.

It is found in the secreted. In terms of biological role, component of chylomicrons, very low-density lipoproteins (VLDL), low-density lipoproteins (LDL), and high-density lipoproteins (HDL) in plasma. Plays an important role in lipoprotein metabolism as an activator of lipoprotein lipase. Both proapolipoprotein C-II and apolipoprotein C-II can activate lipoprotein lipase. In Plecturocebus moloch (Dusky titi monkey), this protein is Apolipoprotein C-II (APOC2).